Consider the following 124-residue polypeptide: Ribonuclease pancreatic (124 aa).

Residues 1–13 show a composition bias toward basic and acidic residues; the sequence is KESAAAKFERQHM. The disordered stretch occupies residues 1–24; the sequence is KESAAAKFERQHMDPSMSSASSSN. Positions 7 and 10 each coordinate substrate. The active-site Proton acceptor is the His12. 4 disulfide bridges follow: Cys26–Cys84, Cys40–Cys95, Cys58–Cys110, and Cys65–Cys72. Substrate-binding positions include 41-45, Lys66, and Arg85; that span reads KPVNT. His119 acts as the Proton donor in catalysis.

It belongs to the pancreatic ribonuclease family. Monomer. Interacts with and forms tight 1:1 complexes with RNH1. Dimerization of two such complexes may occur. Interaction with RNH1 inhibits this protein. As to expression, pancreas.

Its subcellular location is the secreted. It catalyses the reaction an [RNA] containing cytidine + H2O = an [RNA]-3'-cytidine-3'-phosphate + a 5'-hydroxy-ribonucleotide-3'-[RNA].. It carries out the reaction an [RNA] containing uridine + H2O = an [RNA]-3'-uridine-3'-phosphate + a 5'-hydroxy-ribonucleotide-3'-[RNA].. Its function is as follows. Endonuclease that catalyzes the cleavage of RNA on the 3' side of pyrimidine nucleotides. Acts on single-stranded and double-stranded RNA. This is Ribonuclease pancreatic (RNASE1) from Dama dama (Fallow deer).